Reading from the N-terminus, the 334-residue chain is Anthranilate phosphoribosyltransferase (334 aa).

5-phospho-alpha-D-ribose 1-diphosphate contacts are provided by residues G79, 82 to 83, S87, 89 to 92, 107 to 115, and S119; these read GD, NIST, and KHGNRSISS. G79 is a binding site for anthranilate. Residue S91 coordinates Mg(2+). Residue N110 coordinates anthranilate. Residue R165 coordinates anthranilate. Residues D224 and E225 each contribute to the Mg(2+) site.

Belongs to the anthranilate phosphoribosyltransferase family. As to quaternary structure, homodimer. Mg(2+) is required as a cofactor.

It carries out the reaction N-(5-phospho-beta-D-ribosyl)anthranilate + diphosphate = 5-phospho-alpha-D-ribose 1-diphosphate + anthranilate. It participates in amino-acid biosynthesis; L-tryptophan biosynthesis; L-tryptophan from chorismate: step 2/5. Functionally, catalyzes the transfer of the phosphoribosyl group of 5-phosphorylribose-1-pyrophosphate (PRPP) to anthranilate to yield N-(5'-phosphoribosyl)-anthranilate (PRA). This chain is Anthranilate phosphoribosyltransferase, found in Streptococcus sanguinis (strain SK36).